A 399-amino-acid chain; its full sequence is Subtilisin-like protease CPC735_033790 (399 aa).

The signal sequence occupies residues methionine 1 to alanine 20. Positions glycine 21–threonine 117 are excised as a propeptide. Positions serine 37–isoleucine 116 constitute an Inhibitor I9 domain. An N-linked (GlcNAc...) asparagine glycan is attached at asparagine 115. Residues serine 127–valine 399 enclose the Peptidase S8 domain. Catalysis depends on charge relay system residues aspartate 159 and histidine 190. Residue asparagine 251 is glycosylated (N-linked (GlcNAc...) asparagine). The active-site Charge relay system is the serine 345. Asparagine 395 is a glycosylation site (N-linked (GlcNAc...) asparagine).

The protein belongs to the peptidase S8 family.

The protein resides in the secreted. Its function is as follows. Secreted subtilisin-like serine protease with keratinolytic activity that contributes to pathogenicity. The chain is Subtilisin-like protease CPC735_033790 from Coccidioides posadasii (strain C735) (Valley fever fungus).